Here is a 70-residue protein sequence, read N- to C-terminus: Putative microRNA 17 host gene protein (70 aa).

At 1–20 (MFCHVDVKISSKRYTWTKLP) the chain is on the cytoplasmic side. The helical transmembrane segment at 21 to 43 (LNVPKLVLIYLQSHFVLFFFSMC) threads the bilayer. The Extracellular segment spans residues 44–70 (QSIWERPAIGRATTSSASWMVGYDCLL).

In terms of tissue distribution, highly expressed in B-cell lymphoma and lung cancer.

It is found in the membrane. This is Putative microRNA 17 host gene protein (MIR17HG) from Homo sapiens (Human).